The primary structure comprises 156 residues: Glutamine--fructose-6-phosphate aminotransferase [isomerizing] (156 aa).

The region spanning 4–146 is the SIS domain; the sequence is MAHHIVPARD…VLKGTDVDQP (143 aa). The For Fru-6P isomerization activity role is filled by lysine 151.

Homodimer.

It localises to the cytoplasm. It catalyses the reaction D-fructose 6-phosphate + L-glutamine = D-glucosamine 6-phosphate + L-glutamate. Catalyzes the first step in hexosamine metabolism, converting fructose-6P into glucosamine-6P using glutamine as a nitrogen source. The polypeptide is Glutamine--fructose-6-phosphate aminotransferase [isomerizing] (glmS) (Sphingobium yanoikuyae (Sphingomonas yanoikuyae)).